The chain runs to 286 residues: Transcription factor MYB62 (286 aa).

HTH myb-type domains are found at residues 16–68 and 69–123; these read DEEL…LNYL and KPDI…QKQA. DNA-binding regions (H-T-H motif) lie at residues 44 to 68 and 96 to 119; these read WNHVAKCAGLKRTGKSCRLRWLNYL and WSKIAQYLPGRTDNEIKNYWRTRV.

Expressed in leaves and flowers.

The protein resides in the nucleus. In terms of biological role, transcription repressor of phosphate (Pi) starvation-induced genes. Negatively regulates Pi starvation responses via the repression of gibberellic acid (GA) biosynthesis and signaling. Modulates root architecture, phosphatase activity, and Pi uptake and accumulation. The polypeptide is Transcription factor MYB62 (Arabidopsis thaliana (Mouse-ear cress)).